The primary structure comprises 211 residues: MRLTAKQVTWLKVSLHLAGLLPFLWLVWAINHGGLGADPVKDIQHFTGRTALKFLLATLLITPLARYAKQPLLIRTRRLLGLWCFAWATLHLTSYALLELGVNNLALLGKELITRPYLTLGIISWVILLALAFTSTQAMQRKLGKHWQQLHNFVYLVAILAPIHYLWSVKIISPQPLIYAGLAVLLLALRYKKLRSLFNRLRKQVHNKLSV.

Helical transmembrane passes span 17-37 (LAGLLPFLWLVWAINHGGLGA), 82-102 (LWCFAWATLHLTSYALLELGV), 116-136 (PYLTLGIISWVILLALAFTST), and 153-173 (FVYLVAILAPIHYLWSVKIIS).

This sequence belongs to the MsrQ family. As to quaternary structure, heterodimer of a catalytic subunit (MsrP) and a heme-binding subunit (MsrQ). FMN is required as a cofactor. It depends on heme b as a cofactor.

It is found in the cell inner membrane. Functionally, part of the MsrPQ system that repairs oxidized periplasmic proteins containing methionine sulfoxide residues (Met-O), using respiratory chain electrons. Thus protects these proteins from oxidative-stress damage caused by reactive species of oxygen and chlorine generated by the host defense mechanisms. MsrPQ is essential for the maintenance of envelope integrity under bleach stress, rescuing a wide series of structurally unrelated periplasmic proteins from methionine oxidation, including the primary periplasmic chaperone SurA and the lipoprotein Pal. MsrQ provides electrons for reduction to the reductase catalytic subunit MsrP, using the quinone pool of the respiratory chain. In Shigella boydii serotype 18 (strain CDC 3083-94 / BS512), this protein is Protein-methionine-sulfoxide reductase heme-binding subunit MsrQ.